A 557-amino-acid chain; its full sequence is Potassium-transporting ATPase potassium-binding subunit (557 aa).

A run of 12 helical transmembrane segments spans residues 5 to 25 (GFLL…PLGS), 63 to 83 (LCAI…MLLG), 132 to 152 (GLTV…FALI), 170 to 190 (LLRI…LFFI), 253 to 273 (FVQM…FGEV), 283 to 303 (LLWA…WAEV), 329 to 349 (VLVS…AVIA), 356 to 376 (ALGG…FGGV), 379 to 399 (GLYG…LMIG), 416 to 436 (LTAL…ALAM), 484 to 504 (LLAF…MAIA), and 526 to 546 (LFVG…FIPA).

Belongs to the KdpA family. As to quaternary structure, the system is composed of three essential subunits: KdpA, KdpB and KdpC.

Its subcellular location is the cell inner membrane. In terms of biological role, part of the high-affinity ATP-driven potassium transport (or Kdp) system, which catalyzes the hydrolysis of ATP coupled with the electrogenic transport of potassium into the cytoplasm. This subunit binds the periplasmic potassium ions and delivers the ions to the membrane domain of KdpB through an intramembrane tunnel. The chain is Potassium-transporting ATPase potassium-binding subunit from Escherichia coli (strain K12 / MC4100 / BW2952).